We begin with the raw amino-acid sequence, 347 residues long: MPLFTEAPKSLCILRLSAVGDVCHALAVVQHIQEYYPQTEMTWIVGKTEMGLLSSIPNITLIPYDKKTGWKGVLSLWKQLKNKQFDALLNMQTAFRASILSLGIKAKFKIGFGEKRSREGQWLFVNRRIRDPFSPHVLDGFMAFAEYIGVPKAEPKWELAISQDDYKFADQFIDFSRKNLLISPCSSKAEKDWLIEGYAEVANIAHQHNINVIFCSSPAKRELEIVEKITALCHFTPTNIAGKTNLKQLTALISKVDLVLSPDSGPAHIATTQGTPVIGLYAYHNPLRTAPYNNLDNVVSVYEENAQKEFGKPSSELPWATKLKGKNLMTEIQVEPVIGQMKKLGLF.

This sequence belongs to the glycosyltransferase 9 family.

Its pathway is bacterial outer membrane biogenesis; LPS core biosynthesis. Its function is as follows. Catalyzes heptose transfer to the lipopolysaccharide core. It transfers the first L-glycero-D-manno-heptose to the phosphorylated 3-deoxy-alpha-D-manno-octulosonic acid (Kdo-P) of the inner core. The chain is Lipopolysaccharide core heptosyltransferase OpsX from Haemophilus influenzae (strain ATCC 51907 / DSM 11121 / KW20 / Rd).